The primary structure comprises 45 residues: Large ribosomal subunit protein bL34 (45 aa).

This sequence belongs to the bacterial ribosomal protein bL34 family.

This Salinispora tropica (strain ATCC BAA-916 / DSM 44818 / JCM 13857 / NBRC 105044 / CNB-440) protein is Large ribosomal subunit protein bL34.